The sequence spans 190 residues: Embryo-specific protein ATS3B (190 aa).

An N-terminal signal peptide occupies residues 1 to 24 (MASVRLFFTLISFVFIISTSVYES). N-linked (GlcNAc...) asparagine glycosylation is present at N37. One can recognise a PLAT domain in the interval 48 to 158 (CAYTVIISTS…ESVWYGFNYC (111 aa)).

Interacts with EULS3 (via N-terminus). As to expression, expressed in roots, rosette leaves, stems, cauline leaves and flowers.

The protein localises to the secreted. May play a role during embryo development. The chain is Embryo-specific protein ATS3B from Arabidopsis thaliana (Mouse-ear cress).